Reading from the N-terminus, the 87-residue chain is Small ribosomal subunit protein uS15 (87 aa).

Belongs to the universal ribosomal protein uS15 family. As to quaternary structure, part of the 30S ribosomal subunit. Forms a bridge to the 50S subunit in the 70S ribosome, contacting the 23S rRNA.

In terms of biological role, one of the primary rRNA binding proteins, it binds directly to 16S rRNA where it helps nucleate assembly of the platform of the 30S subunit by binding and bridging several RNA helices of the 16S rRNA. Functionally, forms an intersubunit bridge (bridge B4) with the 23S rRNA of the 50S subunit in the ribosome. The chain is Small ribosomal subunit protein uS15 from Acetivibrio thermocellus (strain ATCC 27405 / DSM 1237 / JCM 9322 / NBRC 103400 / NCIMB 10682 / NRRL B-4536 / VPI 7372) (Clostridium thermocellum).